Consider the following 358-residue polypeptide: Isopentenyl-diphosphate delta-isomerase (358 aa).

Arg-12–Lys-13 contacts substrate. FMN is bound by residues Ala-69 to Thr-71, Ser-99, and Asn-128. Substrate is bound at residue Gln-158. Residue Glu-159 participates in Mg(2+) binding. FMN contacts are provided by residues Lys-190, Thr-220, Gly-267–Arg-269, and Ala-288–Gly-289.

It belongs to the IPP isomerase type 2 family. Homooctamer. Dimer of tetramers. The cofactor is FMN. NADPH is required as a cofactor. It depends on Mg(2+) as a cofactor.

The protein localises to the cytoplasm. It carries out the reaction isopentenyl diphosphate = dimethylallyl diphosphate. Functionally, involved in the biosynthesis of isoprenoids. Catalyzes the 1,3-allylic rearrangement of the homoallylic substrate isopentenyl (IPP) to its allylic isomer, dimethylallyl diphosphate (DMAPP). The sequence is that of Isopentenyl-diphosphate delta-isomerase from Listeria monocytogenes serotype 4a (strain HCC23).